The primary structure comprises 632 residues: ATP-dependent RNA helicase mrh4, mitochondrial (632 aa).

A mitochondrion-targeting transit peptide spans 1–37 (MNRLGRMSLPLRSPACLICQTRTTTLIPSSWQTARSM). Residues 49-111 (MALSPDVAKP…KEEAQKKESP (63 aa)) form a disordered region. Residues 97 to 111 (RSGDSKEEAQKKESP) show a composition bias toward basic and acidic residues. The short motif at 141–174 (TSFDQFPLLPVVRNSIVSQALPGLMEVTPTPIQR) is the Q motif element. One can recognise a Helicase ATP-binding domain in the interval 194 to 406 (DDDEPHYDQF…RKRYPDIKRL (213 aa)). 207–214 (AETGSGKT) contributes to the ATP binding site. Residues 353-356 (DEAD) carry the DEAD box motif. Positions 460–632 (FLEPKTKKIL…EGMFRGQALI (173 aa)) constitute a Helicase C-terminal domain.

The protein belongs to the DEAD box helicase family. MRH4 subfamily.

The protein resides in the mitochondrion. It carries out the reaction ATP + H2O = ADP + phosphate + H(+). Functionally, ATP-binding RNA helicase involved in mitochondrial RNA metabolism. Required for maintenance of mitochondrial DNA. This chain is ATP-dependent RNA helicase mrh4, mitochondrial (mrh4), found in Aspergillus clavatus (strain ATCC 1007 / CBS 513.65 / DSM 816 / NCTC 3887 / NRRL 1 / QM 1276 / 107).